Here is a 129-residue protein sequence, read N- to C-terminus: DNA-directed RNA polymerase subunit omega (129 aa).

A disordered region spans residues 76 to 101 (EVDEPEPDPVTLAASAADGEDDDQPE).

It belongs to the RNA polymerase subunit omega family. In terms of assembly, the RNAP catalytic core consists of 2 alpha, 1 beta, 1 beta' and 1 omega subunit. When a sigma factor is associated with the core the holoenzyme is formed, which can initiate transcription.

It carries out the reaction RNA(n) + a ribonucleoside 5'-triphosphate = RNA(n+1) + diphosphate. In terms of biological role, promotes RNA polymerase assembly. Latches the N- and C-terminal regions of the beta' subunit thereby facilitating its interaction with the beta and alpha subunits. The polypeptide is DNA-directed RNA polymerase subunit omega (Agrobacterium fabrum (strain C58 / ATCC 33970) (Agrobacterium tumefaciens (strain C58))).